The following is a 172-amino-acid chain: Ribosome maturation factor RimM (172 aa).

Positions 100–172 constitute a PRC barrel domain; it reads PGEYYRVDLV…RIVVDWDPGF (73 aa).

This sequence belongs to the RimM family. As to quaternary structure, binds ribosomal protein uS19.

It is found in the cytoplasm. In terms of biological role, an accessory protein needed during the final step in the assembly of 30S ribosomal subunit, possibly for assembly of the head region. Essential for efficient processing of 16S rRNA. May be needed both before and after RbfA during the maturation of 16S rRNA. It has affinity for free ribosomal 30S subunits but not for 70S ribosomes. In Methylococcus capsulatus (strain ATCC 33009 / NCIMB 11132 / Bath), this protein is Ribosome maturation factor RimM.